We begin with the raw amino-acid sequence, 1024 residues long: Protein translocase subunit SecA (1024 aa).

ATP contacts are provided by residues Gln143, 161 to 165, and Asp661; that span reads GEGKT. The interval 970 to 1024 is disordered; that stretch reads HKAAESVYTASSDEPETNQEESPQQPAIAEKKPGRNDLCPCGSGKKYKNCHGQQP. Zn(2+) contacts are provided by Cys1008, Cys1010, Cys1019, and His1020.

It belongs to the SecA family. As to quaternary structure, monomer and homodimer. Part of the essential Sec protein translocation apparatus which comprises SecA, SecYEG and auxiliary proteins SecDF. Other proteins may also be involved. It depends on Zn(2+) as a cofactor.

The protein resides in the cell inner membrane. It is found in the cytoplasm. The enzyme catalyses ATP + H2O + cellular proteinSide 1 = ADP + phosphate + cellular proteinSide 2.. Functionally, part of the Sec protein translocase complex. Interacts with the SecYEG preprotein conducting channel. Has a central role in coupling the hydrolysis of ATP to the transfer of proteins into and across the cell membrane, serving as an ATP-driven molecular motor driving the stepwise translocation of polypeptide chains across the membrane. The polypeptide is Protein translocase subunit SecA (Pelodictyon phaeoclathratiforme (strain DSM 5477 / BU-1)).